The chain runs to 206 residues: N-(5'-phosphoribosyl)anthranilate isomerase (206 aa).

It belongs to the TrpF family.

It carries out the reaction N-(5-phospho-beta-D-ribosyl)anthranilate = 1-(2-carboxyphenylamino)-1-deoxy-D-ribulose 5-phosphate. Its pathway is amino-acid biosynthesis; L-tryptophan biosynthesis; L-tryptophan from chorismate: step 3/5. The polypeptide is N-(5'-phosphoribosyl)anthranilate isomerase (Pseudomonas putida (strain GB-1)).